Reading from the N-terminus, the 432-residue chain is 23S rRNA (uracil(1939)-C(5))-methyltransferase RlmD (432 aa).

The TRAM domain maps to 1-54 (MNPVVDILSLDHEGHGVARLDGKVTFVDGALAGERAEIAIFRKHAKYNSANAVA). Positions 67, 73, 76, and 155 each coordinate [4Fe-4S] cluster. 6 residues coordinate S-adenosyl-L-methionine: Gln264, Phe293, Asn298, Glu314, Asn341, and Asp362. Cys389 functions as the Nucleophile in the catalytic mechanism.

Belongs to the class I-like SAM-binding methyltransferase superfamily. RNA M5U methyltransferase family. RlmD subfamily.

It catalyses the reaction uridine(1939) in 23S rRNA + S-adenosyl-L-methionine = 5-methyluridine(1939) in 23S rRNA + S-adenosyl-L-homocysteine + H(+). Catalyzes the formation of 5-methyl-uridine at position 1939 (m5U1939) in 23S rRNA. This is 23S rRNA (uracil(1939)-C(5))-methyltransferase RlmD from Thiobacillus denitrificans (strain ATCC 25259 / T1).